The chain runs to 764 residues: Thyrotropin receptor (764 aa).

The N-terminal stretch at 1 to 21 is a signal peptide; it reads MRPTPLLRLALLLVLPSSLWG. At 22–413 the chain is on the extracellular side; that stretch reads ERCPSPPCEC…EFNPCEDIMG (392 aa). An intrachain disulfide couples C31 to C41. The stretch at 51 to 74 is one LRR 1 repeat; the sequence is PPSTQTLKFIETHLKTIPSRAFSN. Residues N77 and N99 are each glycosylated (N-linked (GlcNAc...) asparagine). LRR repeat units follow at residues 125 to 150, 152 to 174, 176 to 199, 201 to 223, and 225 to 248; these read LPLL…IYST, VFFI…AFQG, SNET…AFNG, KLDA…AFAG, and YSGP…GLEH. 2 N-linked (GlcNAc...) asparagine glycosylation sites follow: N177 and N198. N302 carries N-linked (GlcNAc...) asparagine glycosylation. At Y385 the chain carries Sulfotyrosine. Residues 414 to 441 traverse the membrane as a helical segment; sequence YKFLRIVVWFVSLLALLGNVFVLVILLT. Over 442–450 the chain is Cytoplasmic; that stretch reads SHYKLTVPR. Residues 451–473 form a helical membrane-spanning segment; sequence FLMCNLAFADFCMGLYLLLIASV. Over 474-494 the chain is Extracellular; it reads DLYTQSEYYNHAIDWQTGPGC. A disulfide bridge links C494 with C569. Residues 495 to 517 form a helical membrane-spanning segment; it reads NTAGFFTVFASELSVYTLTVITL. Residues 518–537 are Cytoplasmic-facing; the sequence is ERWYAITFAMHLDRKIRLWH. The chain crosses the membrane as a helical span at residues 538–560; it reads AYVIMLGGWVCCFLLALLPLVGI. The Extracellular segment spans residues 561–580; it reads SSYAKVSICLPMDTETPLAL. The helical transmembrane segment at 581–602 threads the bilayer; sequence AYIILVLLLNIIAFIIVCACYV. Residues 603–625 are Cytoplasmic-facing; the sequence is KIYITVRNPHYNPGDKDTRIAKR. Residues 626 to 649 traverse the membrane as a helical segment; it reads MAVLIFTDFMCMAPISFYALSALM. At 650 to 660 the chain is on the extracellular side; that stretch reads NKPLITVTNSK. Residues 661–682 traverse the membrane as a helical segment; that stretch reads ILLVLFYPLNSCANPFLYAIFT. Residues 683–764 lie on the Cytoplasmic side of the membrane; the sequence is KAFQRDVFML…TSKEYKQTVL (82 aa). The short motif at 762-764 is the PDZ-binding element; sequence TVL.

It belongs to the G-protein coupled receptor 1 family. FSH/LSH/TSH subfamily. In terms of assembly, interacts with heterodimer GPHA2:GPHB5; this interaction stimulates cAMP production. Interacts (via the PDZ-binding motif) with SCRIB; regulates TSHR trafficking and function. Post-translationally, glycosylated. In terms of processing, sulfated. Sulfation on Tyr-385 plays a role in thyrotropin receptor binding and activation.

It localises to the cell membrane. It is found in the basolateral cell membrane. Functionally, receptor for the thyroid-stimulating hormone (TSH) or thyrotropin. Also acts as a receptor for the heterodimeric glycoprotein hormone (GPHA2:GPHB5) or thyrostimulin. The activity of this receptor is mediated by G proteins which activate adenylate cyclase. Plays a central role in controlling thyroid cell metabolism. This Ovis aries (Sheep) protein is Thyrotropin receptor (TSHR).